Reading from the N-terminus, the 148-residue chain is Small ribosomal subunit protein uS15 (148 aa).

The tract at residues 1–23 (MRKSKEKGRSGSTRPPQLKKPEW) is disordered.

Belongs to the universal ribosomal protein uS15 family. In terms of assembly, part of the 30S ribosomal subunit.

This is Small ribosomal subunit protein uS15 from Thermofilum pendens (strain DSM 2475 / Hrk 5).